The primary structure comprises 357 residues: Phosphate acyltransferase (357 aa).

The protein belongs to the PlsX family. Homodimer. Probably interacts with PlsY.

The protein resides in the cytoplasm. The enzyme catalyses a fatty acyl-[ACP] + phosphate = an acyl phosphate + holo-[ACP]. It functions in the pathway lipid metabolism; phospholipid metabolism. Its function is as follows. Catalyzes the reversible formation of acyl-phosphate (acyl-PO(4)) from acyl-[acyl-carrier-protein] (acyl-ACP). This enzyme utilizes acyl-ACP as fatty acyl donor, but not acyl-CoA. In Roseobacter denitrificans (strain ATCC 33942 / OCh 114) (Erythrobacter sp. (strain OCh 114)), this protein is Phosphate acyltransferase.